We begin with the raw amino-acid sequence, 105 residues long: MIASKFGIGQQVRHSLLGYLGVVVDIDPEYSLDEPEVDELAVNAELRAAPWYHVVMEDDDGQPVHTYLAEAQLSGEMQEEHPEQPSMDELARSIRQQLQAPRLRN.

Residues 75–105 form a disordered region; the sequence is GEMQEEHPEQPSMDELARSIRQQLQAPRLRN.

Belongs to the HspQ family.

Its subcellular location is the cytoplasm. In terms of biological role, involved in the degradation of certain denaturated proteins, including DnaA, during heat shock stress. The sequence is that of Heat shock protein HspQ from Cronobacter sakazakii (strain ATCC BAA-894) (Enterobacter sakazakii).